Consider the following 241-residue polypeptide: Probable transcriptional regulatory protein Daro_4067 (241 aa).

The disordered stretch occupies residues 1–22; sequence MAGHSKWANIQHRKGRQDEKRG.

It belongs to the TACO1 family.

The protein localises to the cytoplasm. This chain is Probable transcriptional regulatory protein Daro_4067, found in Dechloromonas aromatica (strain RCB).